We begin with the raw amino-acid sequence, 474 residues long: Glutamate--tRNA ligase 1 (474 aa).

The 'HIGH' region signature appears at 11–21 (PSPTGFLHIGG). A compositionally biased stretch (basic and acidic residues) spans 113-133 (TARAEGRAPRYDGRWRDRDPS). The segment at 113–136 (TARAEGRAPRYDGRWRDRDPSEAP) is disordered. Positions 240–244 (KLSKR) match the 'KMSKS' region motif. Lysine 243 contributes to the ATP binding site.

It belongs to the class-I aminoacyl-tRNA synthetase family. Glutamate--tRNA ligase type 1 subfamily. Monomer.

Its subcellular location is the cytoplasm. The enzyme catalyses tRNA(Glu) + L-glutamate + ATP = L-glutamyl-tRNA(Glu) + AMP + diphosphate. Functionally, catalyzes the attachment of glutamate to tRNA(Glu) in a two-step reaction: glutamate is first activated by ATP to form Glu-AMP and then transferred to the acceptor end of tRNA(Glu). The protein is Glutamate--tRNA ligase 1 of Methylorubrum extorquens (strain PA1) (Methylobacterium extorquens).